We begin with the raw amino-acid sequence, 183 residues long: Oligoribonuclease (183 aa).

The region spanning Leu-8–Leu-171 is the Exonuclease domain. The active site involves Tyr-129.

It belongs to the oligoribonuclease family.

It localises to the cytoplasm. In terms of biological role, 3'-to-5' exoribonuclease specific for small oligoribonucleotides. The polypeptide is Oligoribonuclease (Aromatoleum aromaticum (strain DSM 19018 / LMG 30748 / EbN1) (Azoarcus sp. (strain EbN1))).